The chain runs to 345 residues: DNA endonuclease SAE2 (345 aa).

The tract at residues serine 21–leucine 172 is DNA-binding. Serine 143 carries the phosphoserine modification. Residues serine 265–glutamine 290 form a disordered region. Serine 267 is subject to Phosphoserine; by CDC28.

This sequence belongs to the COM1/SAE2/CtIP family. Dimer or multimer. Interacts with MRE11. In terms of processing, phosphorylated forms accumulate periodically during the unperturbed cell cycle and in response to DNA damage in G2. Phosphorylated by MEC1 and TEL1. Mutagenesis experiments showed that several of the 5 residues located in canonical (S/T)Q motifs, which are favored for phosphorylation by ATM/ATR kinases (Ser-73, Thr-90, Ser-249, Thr-279 and Ser-289) may be phosphorylated. Phosphorylated at Ser-267 by CDC28 which is required to initiate meiotic DSB resection by allowing SPO11 removal from DSB ends.

It localises to the cytoplasm. Its subcellular location is the nucleus. Functionally, endonuclease that cooperates with the MRX complex in processing meiotic and mitotic double-strand breaks by allowing the endonucleolytic removal of SPO11 from the break sites and ensuring both resection and intrachromosomal association of the broken ends. Required for proper recovery from checkpoint-mediated cell cycle arrest after DNA damage. MRX complex and SAE2 remove a small oligonucleotide(s) from the DNA ends to form an early intermediate which is rapidly processed by EXO1 and/or SGS1 to generate extensive tracts of single-stranded DNA that serve as substrate for RAD51. Plays a transitional role in the dissociation of MRE11 from, and the recruitment of RAD52 to, repair foci. Ensures that both ends of a DSB participate in a recombination event and impairs the formation of palindromic structures in the genome. With TEL1, promotes microhomology-mediated end joining (MMEJ) but inhibits non-homologous end joining (NHEJ), likely by regulating MRE11-dependent ssDNA accumulation at DNA break. SAE2 and MRX are particularly important for removal of hairpins, bulky adducts and other irregular end structures. Facilitates telomere length reequilibration and subsequent checkpoint switch off. Involved in homing efficiency of VMA1 intein VDE and in repair of transposon excision sites. This chain is DNA endonuclease SAE2 (SAE2), found in Saccharomyces cerevisiae (strain ATCC 204508 / S288c) (Baker's yeast).